Here is a 370-residue protein sequence, read N- to C-terminus: Probable neutral protease 2 homolog TRV_02539 (370 aa).

Residues 1–19 (MQLVAALAALGALVAPAVA) form the signal peptide. Positions 20 to 188 (YPHAPMNETL…SIHSRALQKR (169 aa)) are excised as a propeptide. Intrachain disulfides connect Cys196–Cys267 and Cys274–Cys292. His316 serves as a coordination point for Zn(2+). Glu317 is a catalytic residue. Residues His320 and Asp331 each contribute to the Zn(2+) site.

It belongs to the peptidase M35 family. The cofactor is Zn(2+).

Its subcellular location is the secreted. The catalysed reaction is Preferential cleavage of bonds with hydrophobic residues in P1'. Also 3-Asn-|-Gln-4 and 8-Gly-|-Ser-9 bonds in insulin B chain.. Its function is as follows. Probable secreted metalloprotease that shows high activities on basic nuclear substrates such as histone and protamine. May be involved in virulence. This is Probable neutral protease 2 homolog TRV_02539 from Trichophyton verrucosum (strain HKI 0517).